Reading from the N-terminus, the 236-residue chain is Reticulon-3 (236 aa).

The span at 1–24 (MAEPSAATQSPSISSSSSGAEPSA) shows a compositional bias: low complexity. The tract at residues 1-31 (MAEPSAATQSPSISSSSSGAEPSAPGGGGSP) is disordered. Alanine 2 is modified (N-acetylalanine). The Cytoplasmic segment spans residues 2–67 (AEPSAATQSP…KKTGFVFGTT (66 aa)). Phosphoserine is present on serine 30. Residues 48 to 236 (VHDLIFWRDV…LPGIAKKKAE (189 aa)) enclose the Reticulon domain. The segment at residues 68–91 (LIMLLSLAAFSVISVVSYLILALL) is an intramembrane region (helical). The Cytoplasmic segment spans residues 92–151 (SVTISFRIYKSVIQAVQKSEEGHPFKAYLDVDITLSSEAFHNYMNAAMVHINRALKLIIR). Positions 152–172 (LFLVEDLVDSLKLAVFMWLMT) form an intramembrane region, helical. Residues 173–176 (YVGA) are Cytoplasmic-facing. The segment at residues 177–197 (VFNGITLLILAELLIFSVPIV) is an intramembrane region (helical). Positions 191–236 (IFSVPIVYEKYKTQIDHYVGIARDQTKSIVEKIQAKLPGIAKKKAE) are interaction with FADD. Over 198 to 236 (YEKYKTQIDHYVGIARDQTKSIVEKIQAKLPGIAKKKAE) the chain is Cytoplasmic. Positions 204 to 206 (QID) are interaction with BACE1.

In terms of assembly, homodimer. Interacts with RTN4. Interacts with BACE1, BACE2, BCL2 and FADD. Interacts with ATL1 and ATL2. Interacts with TMEM33. Interacts with ZFYVE27 and with KIF5A in a ZFYVE27-dependent manner. Interacts with RIGI. Interacts with TRIM25.

The protein localises to the endoplasmic reticulum membrane. The protein resides in the golgi apparatus membrane. In terms of biological role, may be involved in membrane trafficking in the early secretory pathway. Inhibits BACE1 activity and amyloid precursor protein processing. May induce caspase-8 cascade and apoptosis. May favor BCL2 translocation to the mitochondria upon endoplasmic reticulum stress. Induces the formation of endoplasmic reticulum tubules. Acts also as an inflammation-resolving regulator by interacting with both TRIM25 and RIGI, subsequently impairing RIGI 'Lys-63'-linked polyubiquitination leading to IRF3 and NF-kappa-B inhibition. In Pongo abelii (Sumatran orangutan), this protein is Reticulon-3 (RTN3).